The following is a 254-amino-acid chain: MTKLEVCCYSVDCAQIAEKAGADRVELCCGQSEGGLTPSVGALMQARETVTIPVHPIVRPRGGDFCYSSNDFTIMKNDIARIRDLGFAGVVVGVLDTDGHIDMPRMREIMSVSGSLAVTFHRAFDMCQNPMIALKQLAELNVARILTSGQQQNAELGLALLKDLVAATKDQGPIIMAGAGVRLTNMQKFIDAGIRELHSSAGRTVPSTMRYRKAGVTMCADSDVDEFSHYCVDGEVVEAMKSLLVMGSPLAKHT.

Belongs to the CutC family.

The protein resides in the cytoplasm. This Yersinia pseudotuberculosis serotype I (strain IP32953) protein is PF03932 family protein CutC.